Here is a 465-residue protein sequence, read N- to C-terminus: Cytochrome P450 85A2 (465 aa).

Residues 2–22 (GIMMMILGLLVIIVCLCTALL) form a helical membrane-spanning segment. Cys415 provides a ligand contact to heme. The S-farnesyl cysteine moiety is linked to residue Cys462. The Farnesylation CAAX motif signature appears at 462–465 (CSPY).

Belongs to the cytochrome P450 family. Requires heme as cofactor. Post-translationally, isoprenylated (farnesylated); this addition of a 15-carbon farnesyl isoprenoid to the carboxy terminus is required for endoplasmic reticulum localization and essential for the biosynthesis of brassinolide. As to expression, expressed in stems, hypocotyls, leaves, siliques, shoots, and roots, with a higher expression in apical shoots.

The protein resides in the membrane. It is found in the endoplasmic reticulum. It catalyses the reaction 6-deoxoteasterone + reduced [NADPH--hemoprotein reductase] + O2 = 6alpha-hydroxyteasterone + oxidized [NADPH--hemoprotein reductase] + H2O + H(+). The enzyme catalyses 6alpha-hydroxytyphasterol + reduced [NADPH--hemoprotein reductase] + O2 = teasterone + oxidized [NADPH--hemoprotein reductase] + 2 H2O + H(+). The catalysed reaction is 3-dehydro-6-deoxoteasterone + reduced [NADPH--hemoprotein reductase] + O2 = 3-dehydro-6alpha-hydroxyteasterone + oxidized [NADPH--hemoprotein reductase] + H2O + H(+). It carries out the reaction 3-dehydro-6alpha-hydroxyteasterone + reduced [NADPH--hemoprotein reductase] + O2 = 3-dehydroteasterone + oxidized [NADPH--hemoprotein reductase] + 2 H2O + H(+). It catalyses the reaction 6-deoxotyphasterol + reduced [NADPH--hemoprotein reductase] + O2 = 6alpha-hydroxytyphasterol + oxidized [NADPH--hemoprotein reductase] + H2O + H(+). The enzyme catalyses 6alpha-hydroxytyphasterol + reduced [NADPH--hemoprotein reductase] + O2 = typhasterol + oxidized [NADPH--hemoprotein reductase] + 2 H2O + H(+). The catalysed reaction is 6-deoxocastasterone + reduced [NADPH--hemoprotein reductase] + O2 = 6alpha-hydroxycastasterone + oxidized [NADPH--hemoprotein reductase] + H2O + H(+). It carries out the reaction 6alpha-hydroxycastasterone + reduced [NADPH--hemoprotein reductase] + O2 = castasterone + oxidized [NADPH--hemoprotein reductase] + 2 H2O + H(+). It catalyses the reaction 6-deoxo-28-norteasterone + 2 reduced [NADPH--hemoprotein reductase] + 2 O2 = 28-norteasterone + 2 oxidized [NADPH--hemoprotein reductase] + 3 H2O + 2 H(+). The enzyme catalyses 6-deoxo-28-norteasterone + reduced [NADPH--hemoprotein reductase] + O2 = 6alpha-hydroxy-28-norteasterone + oxidized [NADPH--hemoprotein reductase] + H2O + H(+). The catalysed reaction is 6alpha-hydroxy-28-norteasterone + reduced [NADPH--hemoprotein reductase] + O2 = 28-norteasterone + oxidized [NADPH--hemoprotein reductase] + 2 H2O + H(+). It carries out the reaction 6-deoxo-28-nortyphasterol + 2 reduced [NADPH--hemoprotein reductase] + 2 O2 = 28-nortyphasterol + 2 oxidized [NADPH--hemoprotein reductase] + 3 H2O + 2 H(+). It catalyses the reaction 6-deoxo-28-nortyphasterol + reduced [NADPH--hemoprotein reductase] + O2 = 6alpha-hydroxy-28-nortyphasterol + oxidized [NADPH--hemoprotein reductase] + H2O + H(+). The enzyme catalyses 6alpha-hydroxy-28-nortyphasterol + reduced [NADPH--hemoprotein reductase] + O2 = 28-nortyphasterol + oxidized [NADPH--hemoprotein reductase] + 2 H2O + H(+). The catalysed reaction is 6-deoxo-28-norcastasterone + 2 reduced [NADPH--hemoprotein reductase] + 2 O2 = 28-norcastasterone + 2 oxidized [NADPH--hemoprotein reductase] + 3 H2O + 2 H(+). It carries out the reaction 6-deoxo-28-norcastasterone + reduced [NADPH--hemoprotein reductase] + O2 = 6alpha-hydroxy-28-norcastasterone + oxidized [NADPH--hemoprotein reductase] + H2O + H(+). It catalyses the reaction 6alpha-hydroxy-28-norcastasterone + reduced [NADPH--hemoprotein reductase] + O2 = 28-norcastasterone + oxidized [NADPH--hemoprotein reductase] + 2 H2O + H(+). The enzyme catalyses 3-dehydro-6-deoxo-28-norteasterone + 2 reduced [NADPH--hemoprotein reductase] + 2 O2 = 6-dehydro-28-norteasterone + 2 oxidized [NADPH--hemoprotein reductase] + 3 H2O + 2 H(+). The catalysed reaction is 3-dehydro-6-deoxo-28-norteasterone + reduced [NADPH--hemoprotein reductase] + O2 = 3-dehydro-6alpha-hydroxy-28-norteasterone + oxidized [NADPH--hemoprotein reductase] + H2O + H(+). It carries out the reaction 3-dehydro-6alpha-hydroxy-28-norteasterone + reduced [NADPH--hemoprotein reductase] + O2 = 6-dehydro-28-norteasterone + oxidized [NADPH--hemoprotein reductase] + 2 H2O + H(+). It catalyses the reaction teasterone + reduced [NADPH--hemoprotein reductase] + O2 = 7-oxateasterone + oxidized [NADPH--hemoprotein reductase] + H2O + H(+). The enzyme catalyses castasterone + reduced [NADPH--hemoprotein reductase] + O2 = brassinolide + oxidized [NADPH--hemoprotein reductase] + H2O + H(+). The catalysed reaction is typhasterol + reduced [NADPH--hemoprotein reductase] + O2 = 7-oxatyphasterol + oxidized [NADPH--hemoprotein reductase] + H2O + H(+). It carries out the reaction 6-deoxocastasterone + 2 reduced [NADPH--hemoprotein reductase] + 2 O2 = castasterone + 2 oxidized [NADPH--hemoprotein reductase] + 3 H2O + 2 H(+). It catalyses the reaction 6-deoxoteasterone + 2 reduced [NADPH--hemoprotein reductase] + 2 O2 = teasterone + 2 oxidized [NADPH--hemoprotein reductase] + 3 H2O + 2 H(+). The enzyme catalyses 6-deoxotyphasterol + 2 reduced [NADPH--hemoprotein reductase] + 2 O2 = typhasterol + 2 oxidized [NADPH--hemoprotein reductase] + 3 H2O + 2 H(+). The catalysed reaction is 3-dehydro-6-deoxoteasterone + 2 reduced [NADPH--hemoprotein reductase] + 2 O2 = 3-dehydroteasterone + 2 oxidized [NADPH--hemoprotein reductase] + 3 H2O + 2 H(+). Its pathway is plant hormone biosynthesis; brassinosteroid biosynthesis. Mediates Baeyer-Villiger oxidation and catalyzes the C6-oxidation step and lactonization in brassinosteroids biosynthesis. Converts 6-deoxocastasterone (6-deoxoCS) to castasterone (CS), and castasterone to brassinolide (BL). May also convert 6-deoxoteasterone (6-deoxoTE) to teasterone (TE), 3-dehydro-6-deoxoteasterone (6-deoxo3DT, 6-deoxo-3-DHT) to 3-dehydroteasterone (3DT, 3-DHT), and 6-deoxotyphasterol (6-deoxoTY) to typhasterol (TY). Also seems to be able to convert teasterone (TE) and typhasterol (TY) to 7-oxateasterone (7-OXTE) and 7-oxatyphasterol (7-OXTY), respectively. Catalyzes the conversion of 6-deoxo-28-norteasterone (6-deoxo-28-norTE) to 28-norteasterone (28-norTE), 6-deoxo-28-nordeoxoteasterone (6-deoxo-28-nor-3-DHT) to 28-nordeoxoteasterone (28-nor-3-DHT), 6-deoxo-28-nortyphasterol (6-deoxo-28-norTY) to 28-nortyphasterol (28-norTY) and 6-deoxo-28-norcastasterone (6-deoxo-28-norCS) to 28-norcastasterone (28-norCS). Involved in a negative regulation of responses to abscisic acid (ABA) and drought tolerance. The protein is Cytochrome P450 85A2 (CYP85A2) of Arabidopsis thaliana (Mouse-ear cress).